The following is a 153-amino-acid chain: Aspartate carbamoyltransferase regulatory chain (153 aa).

Zn(2+) contacts are provided by Cys-109, Cys-114, Cys-138, and Cys-141.

It belongs to the PyrI family. Contains catalytic and regulatory chains. Zn(2+) serves as cofactor.

Involved in allosteric regulation of aspartate carbamoyltransferase. This chain is Aspartate carbamoyltransferase regulatory chain, found in Shigella dysenteriae serotype 1 (strain Sd197).